Here is a 218-residue protein sequence, read N- to C-terminus: Small ribosomal subunit protein uS3 (218 aa).

One can recognise a KH type-2 domain in the interval 38 to 106 (IREYLTKRLS…RVHINIVEIK (69 aa)).

The protein belongs to the universal ribosomal protein uS3 family. In terms of assembly, part of the 30S ribosomal subunit. Forms a tight complex with proteins S10 and S14.

Its function is as follows. Binds the lower part of the 30S subunit head. Binds mRNA in the 70S ribosome, positioning it for translation. This is Small ribosomal subunit protein uS3 from Anoxybacillus flavithermus (strain DSM 21510 / WK1).